A 155-amino-acid polypeptide reads, in one-letter code: Ribonuclease H (155 aa).

Residues 5-146 (LAEVVEIFTD…ADMLANRGVQ (142 aa)) form the RNase H type-1 domain. 4 residues coordinate Mg(2+): Asp14, Glu52, Asp74, and Asp138.

The protein belongs to the RNase H family. As to quaternary structure, monomer. Mg(2+) serves as cofactor.

The protein resides in the cytoplasm. The enzyme catalyses Endonucleolytic cleavage to 5'-phosphomonoester.. Its function is as follows. Endonuclease that specifically degrades the RNA of RNA-DNA hybrids. In Nitrosospira multiformis (strain ATCC 25196 / NCIMB 11849 / C 71), this protein is Ribonuclease H.